A 289-amino-acid polypeptide reads, in one-letter code: Diaminopimelate epimerase (289 aa).

The substrate site is built by N11 and N78. Residue C87 is the Proton donor of the active site. Substrate-binding positions include 88-89, N163, N199, and 217-218; these read GN and ER. The Proton acceptor role is filled by C226. 227–228 lines the substrate pocket; it reads GT.

This sequence belongs to the diaminopimelate epimerase family. In terms of assembly, homodimer.

The protein resides in the cytoplasm. It carries out the reaction (2S,6S)-2,6-diaminopimelate = meso-2,6-diaminopimelate. Its pathway is amino-acid biosynthesis; L-lysine biosynthesis via DAP pathway; DL-2,6-diaminopimelate from LL-2,6-diaminopimelate: step 1/1. Functionally, catalyzes the stereoinversion of LL-2,6-diaminopimelate (L,L-DAP) to meso-diaminopimelate (meso-DAP), a precursor of L-lysine and an essential component of the bacterial peptidoglycan. This is Diaminopimelate epimerase from Mycolicibacterium vanbaalenii (strain DSM 7251 / JCM 13017 / BCRC 16820 / KCTC 9966 / NRRL B-24157 / PYR-1) (Mycobacterium vanbaalenii).